A 228-amino-acid chain; its full sequence is Probable ribosomal RNA small subunit methyltransferase A (228 aa).

6 residues coordinate S-adenosyl-L-methionine: His-9, Leu-11, Gly-34, Glu-55, Asp-78, and Asn-93.

It belongs to the class I-like SAM-binding methyltransferase superfamily. rRNA adenine N(6)-methyltransferase family. RsmA subfamily.

It localises to the cytoplasm. Functionally, specifically dimethylates two adjacent adenosines in the loop of a conserved hairpin near the 3'-end of 16S rRNA in the 30S particle. May play a critical role in biogenesis of 30S subunits. The chain is Probable ribosomal RNA small subunit methyltransferase A from Pyrobaculum aerophilum (strain ATCC 51768 / DSM 7523 / JCM 9630 / CIP 104966 / NBRC 100827 / IM2).